The chain runs to 33 residues: Beta-theraphotoxin-Cm1a (33 aa).

3 disulfides stabilise this stretch: Cys-2–Cys-17, Cys-9–Cys-22, and Cys-16–Cys-29. Leu-33 is modified (leucine amide).

This sequence belongs to the neurotoxin 10 (Hwtx-1) family. 04 (CcoTx1) subfamily. Expressed by the venom gland.

The protein localises to the secreted. Functionally, inhibits many voltage-gated sodium channels and one voltage-gated calcium channel (Cav2.2/CACNA1B (IC(50)=400 nM), Nav1.2/SCN2A (IC(50)=3-70 nM), Nav1.1/SCN1A (IC(50)=523-1060 nM), Nav1.7/SCN9A (IC(50)=129.1-5120 nM), Nav1.4/SCN4A (IC(50)=263-888 nM or &gt;10 uM) and Nav1.5/SCN5A (IC(50)=188-323 nM or &gt;10 uM)). It acts by shifting the voltage dependence of channel activation to more depolarized potentials and by blocking the inward component of the sodium current. It shows moderate affinity for lipid bilayers. On Nav1.7/SCN9A, it has been shown to interact with the S3-S4 loop of domain DII (site 4). Is significantly more potent against Nav1.2/SCN2A than the other Nav channel subtypes. In vivo, this toxin causes general ataxia, lack of response to stimuli, and semiparalysis. After a few minutes, the mice are unable to stand, and breathing is reduced in rhythm and intensity. Symptoms gradually increase with progressive slowing of breathing and flaccid paralysis, death occurred within 10 to 20 minutes post injection. Animals remain totally flaccid, and no symptoms of excitatory neurotoxicity are observed. In Ceratogyrus marshalli (Straighthorned baboon tarantula), this protein is Beta-theraphotoxin-Cm1a.